Here is a 333-residue protein sequence, read N- to C-terminus: Protein pelota homolog (333 aa).

It belongs to the eukaryotic release factor 1 family. Pelota subfamily. Monomer. A divalent metal cation serves as cofactor.

It is found in the cytoplasm. Its function is as follows. May function in recognizing stalled ribosomes, interact with stem-loop structures in stalled mRNA molecules, and effect endonucleolytic cleavage of the mRNA. May play a role in the release non-functional ribosomes and degradation of damaged mRNAs. Has endoribonuclease activity. This is Protein pelota homolog from Pyrobaculum arsenaticum (strain DSM 13514 / JCM 11321 / PZ6).